A 313-amino-acid chain; its full sequence is Acetyl-coenzyme A carboxylase carboxyl transferase subunit alpha (313 aa).

The CoA carboxyltransferase C-terminal domain maps to 34–288 (KLKDQRDIAL…KNVVLEAVNE (255 aa)).

The protein belongs to the AccA family. In terms of assembly, acetyl-CoA carboxylase is a heterohexamer composed of biotin carboxyl carrier protein (AccB), biotin carboxylase (AccC) and two subunits each of ACCase subunit alpha (AccA) and ACCase subunit beta (AccD).

The protein localises to the cytoplasm. It carries out the reaction N(6)-carboxybiotinyl-L-lysyl-[protein] + acetyl-CoA = N(6)-biotinyl-L-lysyl-[protein] + malonyl-CoA. It participates in lipid metabolism; malonyl-CoA biosynthesis; malonyl-CoA from acetyl-CoA: step 1/1. Its function is as follows. Component of the acetyl coenzyme A carboxylase (ACC) complex. First, biotin carboxylase catalyzes the carboxylation of biotin on its carrier protein (BCCP) and then the CO(2) group is transferred by the carboxyltransferase to acetyl-CoA to form malonyl-CoA. The chain is Acetyl-coenzyme A carboxylase carboxyl transferase subunit alpha from Fusobacterium nucleatum subsp. nucleatum (strain ATCC 25586 / DSM 15643 / BCRC 10681 / CIP 101130 / JCM 8532 / KCTC 2640 / LMG 13131 / VPI 4355).